Consider the following 1336-residue polypeptide: Putative botulinum-like toxin Wo (1336 aa).

The segment at 1-476 (MDVLEMFDVN…VAGMQRMVSL (476 aa)) is has protease activity. His-250 contributes to the Zn(2+) binding site. Residue Glu-251 is part of the active site. Zn(2+) contacts are provided by His-254 and Glu-296.

Belongs to the peptidase M27 family. It depends on Zn(2+) as a cofactor.

It carries out the reaction Limited hydrolysis of proteins of the neuroexocytosis apparatus, synaptobrevins, SNAP25 or syntaxin. No detected action on small molecule substrates.. Inhibited by EDTA and 1,10-phenanthroline. In terms of biological role, when overexpressed the N-terminus (residues 1-476) cleaves rat synaptobrevin-2/VAMP2 between '89-Trp-|-Trp-90' in vitro. This releases the cytoplasmic domain of VAMP2 from the synaptic vesicle membrane, which would prevent the assembly of the trans-SNARE complex on the membrane and thus prevent vesicle-target membrane fusion and neurotransmitter release. In Weissella oryzae (strain DSM 25784 / JCM 18191 / LMG 30913 / SG25), this protein is Putative botulinum-like toxin Wo.